The following is a 654-amino-acid chain: Probable Xaa-Pro aminopeptidase P (654 aa).

Residues Asp449, Asp460, Glu558, and Glu572 each coordinate Mn(2+).

It belongs to the peptidase M24B family. Requires Mn(2+) as cofactor.

The catalysed reaction is Release of any N-terminal amino acid, including proline, that is linked to proline, even from a dipeptide or tripeptide.. Catalyzes the removal of a penultimate prolyl residue from the N-termini of peptides. The sequence is that of Probable Xaa-Pro aminopeptidase P (ampp) from Aspergillus fumigatus (strain CBS 144.89 / FGSC A1163 / CEA10) (Neosartorya fumigata).